The primary structure comprises 447 residues: Ribulose bisphosphate carboxylase large chain (447 aa).

At lysine 5 the chain carries N6,N6,N6-trimethyllysine. Residues asparagine 114 and threonine 164 each coordinate substrate. Lysine 166 serves as the catalytic Proton acceptor. Lysine 168 contributes to the substrate binding site. 3 residues coordinate Mg(2+): lysine 192, aspartate 194, and glutamate 195. At lysine 192 the chain carries N6-carboxylysine. The Proton acceptor role is filled by histidine 285. Substrate-binding residues include arginine 286, histidine 318, and serine 370.

It belongs to the RuBisCO large chain family. Type I subfamily. As to quaternary structure, heterohexadecamer of 8 large chains and 8 small chains; disulfide-linked. The disulfide link is formed within the large subunit homodimers. Mg(2+) is required as a cofactor. Post-translationally, the disulfide bond which can form in the large chain dimeric partners within the hexadecamer appears to be associated with oxidative stress and protein turnover.

It is found in the plastid. The protein resides in the chloroplast. It carries out the reaction 2 (2R)-3-phosphoglycerate + 2 H(+) = D-ribulose 1,5-bisphosphate + CO2 + H2O. The catalysed reaction is D-ribulose 1,5-bisphosphate + O2 = 2-phosphoglycolate + (2R)-3-phosphoglycerate + 2 H(+). Functionally, ruBisCO catalyzes two reactions: the carboxylation of D-ribulose 1,5-bisphosphate, the primary event in carbon dioxide fixation, as well as the oxidative fragmentation of the pentose substrate in the photorespiration process. Both reactions occur simultaneously and in competition at the same active site. In Camassia leichtlinii (Western quamash), this protein is Ribulose bisphosphate carboxylase large chain.